The primary structure comprises 116 residues: NADH-ubiquinone oxidoreductase chain 3 (116 aa).

The next 3 helical transmembrane spans lie at 3–23 (LLMT…IVSF), 56–76 (FFLI…LLPL), and 85–105 (PLLT…GLIY).

Belongs to the complex I subunit 3 family.

The protein localises to the mitochondrion membrane. It carries out the reaction a ubiquinone + NADH + 5 H(+)(in) = a ubiquinol + NAD(+) + 4 H(+)(out). In terms of biological role, core subunit of the mitochondrial membrane respiratory chain NADH dehydrogenase (Complex I) that is believed to belong to the minimal assembly required for catalysis. Complex I functions in the transfer of electrons from NADH to the respiratory chain. The immediate electron acceptor for the enzyme is believed to be ubiquinone. This is NADH-ubiquinone oxidoreductase chain 3 (MT-ND3) from Paralichthys olivaceus (Bastard halibut).